Consider the following 319-residue polypeptide: Malate dehydrogenase (319 aa).

NAD(+) contacts are provided by residues 10-15 (GAGQIG) and Asp-34. Residues Arg-85 and Arg-91 each contribute to the substrate site. NAD(+) is bound by residues Asn-98 and 121–123 (ITN). Residues Asn-123 and Arg-154 each coordinate substrate. The Proton acceptor role is filled by His-178.

The protein belongs to the LDH/MDH superfamily. MDH type 3 family.

It carries out the reaction (S)-malate + NAD(+) = oxaloacetate + NADH + H(+). In terms of biological role, catalyzes the reversible oxidation of malate to oxaloacetate. This Rhodospirillum centenum (strain ATCC 51521 / SW) protein is Malate dehydrogenase.